The following is a 581-amino-acid chain: Membrane protein insertase YidC (581 aa).

The chain crosses the membrane as a helical span at residues 7-27 (ILIVALAVVSYLMVLQWNEDY). The disordered stretch occupies residues 41–62 (AATPALPDTPADTASTGGDDIP). Helical transmembrane passes span 365–385 (TVDY…LEVI), 388–408 (LLGN…LIFF), 458–478 (LGGC…YWVL), 489–509 (WMFW…PIIM), and 536–556 (PIIF…YWVV).

This sequence belongs to the OXA1/ALB3/YidC family. Type 1 subfamily. As to quaternary structure, interacts with the Sec translocase complex via SecD. Specifically interacts with transmembrane segments of nascent integral membrane proteins during membrane integration.

It is found in the cell inner membrane. Its function is as follows. Required for the insertion and/or proper folding and/or complex formation of integral membrane proteins into the membrane. Involved in integration of membrane proteins that insert both dependently and independently of the Sec translocase complex, as well as at least some lipoproteins. Aids folding of multispanning membrane proteins. The polypeptide is Membrane protein insertase YidC (Ectopseudomonas mendocina (strain ymp) (Pseudomonas mendocina)).